Consider the following 204-residue polypeptide: Methyl-CpG-binding domain protein 3-like 2B (204 aa).

A compositionally biased stretch (basic and acidic residues) spans 126-137 (SLDRAGAERVRS). Positions 126–145 (SLDRAGAERVRSPLEPTPGR) are disordered.

Belongs to the MBD3L family.

The protein is Methyl-CpG-binding domain protein 3-like 2B of Homo sapiens (Human).